We begin with the raw amino-acid sequence, 292 residues long: Fat storage-inducing transmembrane protein 1 (292 aa).

The Lumenal segment spans residues 1–18 (MERGPVVGAGLGAGARIQ). Residues 19–39 (ALLGCLLKVLLWVASALLYFG) form a helical membrane-spanning segment. The Cytoplasmic portion of the chain corresponds to 40 to 54 (SEQAARLLGSPCLRR). Residues 55–75 (LYHAWLAAVVIFGPLLQFHVN) form a helical membrane-spanning segment. Over 76-94 (PRTIFASHGNFFNIKFVNS) the chain is Lumenal. The chain crosses the membrane as a helical span at residues 95–115 (AWGWTCTFLGGFVLLVVFLAT). Residues 116–141 (RRVAVTARHLSRLVVGAAVWRGAGRA) are Cytoplasmic-facing. A helical membrane pass occupies residues 142–162 (FLLIEDLTGSCFEPLPQGLLL). Topologically, residues 163-187 (HELPDRRSCLAAGHQWRGYTVSSHT) are lumenal. Residue histidine 186 is part of the active site. Residues 188–208 (FLLTFCCLLMAEEAAVFAKYL) traverse the membrane as a helical segment. Residues 209–220 (AHGLPAGAPLRL) lie on the Cytoplasmic side of the membrane. Residues 221–241 (VFLLNVLLLGLWNFLLLCTVI) form a helical membrane-spanning segment. Residues 242–249 (YFHQYTHK) are Lumenal-facing. Histidine 244 is an active-site residue. The chain crosses the membrane as a helical span at residues 250-270 (VVGAAVGTFAWYLTYGSWYHQ). Topologically, residues 271–292 (PWSPGSPGHGLFPRPHSSRKHN) are cytoplasmic.

The protein belongs to the FIT family. FIT1 subfamily. As to expression, primarily expressed in heart and skeletal muscle.

Its subcellular location is the endoplasmic reticulum membrane. In terms of biological role, plays an important role in the formation of lipid droplets (LDs) which are storage organelles at the center of lipid and energy homeostasis. Directly binds to diacylglycerol (DAGs) and triacylglycerol. In Homo sapiens (Human), this protein is Fat storage-inducing transmembrane protein 1.